Here is a 320-residue protein sequence, read N- to C-terminus: Ferrochelatase (320 aa).

Fe cation contacts are provided by H194 and E275.

The protein belongs to the ferrochelatase family. Monomer.

It is found in the cytoplasm. The enzyme catalyses heme b + 2 H(+) = protoporphyrin IX + Fe(2+). It functions in the pathway porphyrin-containing compound metabolism; protoheme biosynthesis; protoheme from protoporphyrin-IX: step 1/1. Its function is as follows. Catalyzes the ferrous insertion into protoporphyrin IX. This Escherichia coli O139:H28 (strain E24377A / ETEC) protein is Ferrochelatase.